A 176-amino-acid chain; its full sequence is Translation initiation factor IF-3 (176 aa).

Belongs to the IF-3 family. As to quaternary structure, monomer.

The protein localises to the cytoplasm. In terms of biological role, IF-3 binds to the 30S ribosomal subunit and shifts the equilibrium between 70S ribosomes and their 50S and 30S subunits in favor of the free subunits, thus enhancing the availability of 30S subunits on which protein synthesis initiation begins. This chain is Translation initiation factor IF-3, found in Streptococcus thermophilus (strain ATCC BAA-491 / LMD-9).